Reading from the N-terminus, the 493-residue chain is Probable polyol transporter 6 (493 aa).

12 helical membrane-spanning segments follow: residues S25–I45, V54–A74, Y85–P105, T116–A136, G142–V162, L177–P197, V275–L295, L313–L333, L343–T363, L372–I392, G414–L434, and G444–L464.

The protein belongs to the major facilitator superfamily. Sugar transporter (TC 2.A.1.1) family.

Its subcellular location is the membrane. Functionally, plasma membrane sugar-proton symporter. This chain is Probable polyol transporter 6 (PLT6), found in Arabidopsis thaliana (Mouse-ear cress).